The primary structure comprises 548 residues: Leucine-rich repeat LGI family member 3 (548 aa).

A signal peptide spans 1–30 (MAGLRARRGPGRRLLVLSTLGFCLMLQVSA). Residues 31-64 (KRPPKTPPCPPSCSCTRDTAFCVDSKSVPKNLPS) enclose the LRRNT domain. 3 LRR repeats span residues 89–110 (LLQF…AFIG), 113–134 (HLQY…TFRG), and 137–158 (SLTH…IFRP). Residues 170-220 (NALNCDCKVKWLVEWLAHTNTTVAPIYCASPPRFQEHKVQDLPLREFDCIT) enclose the LRRCT domain. Residue N189 is glycosylated (N-linked (GlcNAc...) asparagine). 2 EAR repeats span residues 222 to 264 (DFVL…KWDY) and 268 to 310 (QLRD…HWDP). A glycan (N-linked (GlcNAc...) asparagine) is linked at N311. EAR repeat units lie at residues 314–361 (RFTK…RWHQ), 363–406 (GFYS…QWSR), 410–453 (QFVA…RWEG), 455–497 (RFSE…QWDE), and 501–543 (KFVR…RHVV).

In terms of assembly, interacts with STX1A. Brain.

It is found in the secreted. The protein localises to the cytoplasmic vesicle. The protein resides in the secretory vesicle. Its subcellular location is the synaptic vesicle. It localises to the synapse. It is found in the synaptosome. The protein localises to the cell projection. The protein resides in the axon. May participate in the regulation of neuronal exocytosis. This Mus musculus (Mouse) protein is Leucine-rich repeat LGI family member 3 (Lgi3).